A 488-amino-acid chain; its full sequence is Solanidine UDP-glucose glucosyltransferase 1 (488 aa).

H23 serves as the catalytic Proton acceptor. Residue H23 coordinates an anthocyanidin. D127 acts as the Charge relay in catalysis. UDP-alpha-D-glucose-binding residues include V352, Q354, H369, N373, S374, and E377. A392 serves as a coordination point for an anthocyanidin. The UDP-alpha-D-glucose site is built by D393 and Q394.

Belongs to the UDP-glycosyltransferase family. As to expression, expressed in the shoot apical meristem (SAM) and tuber.

The catalysed reaction is solasodine + UDP-alpha-D-glucose = solasodine 3-beta-D-glucoside + UDP + H(+). It carries out the reaction solanidine + UDP-alpha-D-glucose = solanidine 3-O-beta-D-glucopyranoside + UDP + H(+). It catalyses the reaction tomatidine + UDP-alpha-D-glucose = tomatidine 3-O-beta-D-glucopyranoside + UDP + H(+). Functionally, glucosyltransferase involved in the glucosylation of the steroidal alkaloid aglycons solanidine, solasodine and tomatidine to produce their corresponding glycoalkaloids. The chain is Solanidine UDP-glucose glucosyltransferase 1 from Solanum tuberosum (Potato).